Reading from the N-terminus, the 259-residue chain is Ribosomal RNA small subunit methyltransferase J (259 aa).

S-adenosyl-L-methionine-binding positions include 101 to 102 (RD), 117 to 118 (ER), 153 to 154 (SS), and D176.

The protein belongs to the methyltransferase superfamily. RsmJ family.

It localises to the cytoplasm. The catalysed reaction is guanosine(1516) in 16S rRNA + S-adenosyl-L-methionine = N(2)-methylguanosine(1516) in 16S rRNA + S-adenosyl-L-homocysteine + H(+). Functionally, specifically methylates the guanosine in position 1516 of 16S rRNA. The sequence is that of Ribosomal RNA small subunit methyltransferase J from Vibrio campbellii (strain ATCC BAA-1116).